The following is a 98-amino-acid chain: Large ribosomal subunit protein uL23 (98 aa).

It belongs to the universal ribosomal protein uL23 family. Part of the 50S ribosomal subunit. Contacts protein L29, and trigger factor when it is bound to the ribosome.

Functionally, one of the early assembly proteins it binds 23S rRNA. One of the proteins that surrounds the polypeptide exit tunnel on the outside of the ribosome. Forms the main docking site for trigger factor binding to the ribosome. The chain is Large ribosomal subunit protein uL23 from Saccharophagus degradans (strain 2-40 / ATCC 43961 / DSM 17024).